A 521-amino-acid chain; its full sequence is Cyclic AMP-responsive element-binding protein 3-like protein 2 (521 aa).

The Cytoplasmic portion of the chain corresponds to 1–378; it reads MEVLESGEQS…CKLAGTQTGT (378 aa). Polar residues predominate over residues 83 to 103; the sequence is YSLSEEPRTQSPFTHAATSDS. The tract at residues 83–106 is disordered; the sequence is YSLSEEPRTQSPFTHAATSDSFND. S93 carries the post-translational modification Phosphoserine. Residue K178 forms a Glycyl lysine isopeptide (Lys-Gly) (interchain with G-Cter in SUMO2) linkage. S191 carries the post-translational modification Phosphoserine. The segment at 196-264 is disordered; the sequence is SVDQLHLPPT…PHKLQGSGPL (69 aa). Residues 208 to 220 show a composition bias toward low complexity; that stretch reads SSHSSDSEGSLSP. In terms of domain architecture, bZIP spans 294 to 357; the sequence is ALKKIRRKIK…RTLLQQLQKL (64 aa). Residues 296-325 are basic motif; it reads KKIRRKIKNKISAQESRRKKKEYMDSLEKK. The segment at 336 to 357 is leucine-zipper; it reads LRKKVEVLENTNRTLLQQLQKL. A helical; Signal-anchor for type II membrane protein transmembrane segment spans residues 379-399; the sequence is CLMVVVLCFAVAFGSFFQGYG. The Lumenal portion of the chain corresponds to 400-521; sequence PYPSATKMAL…ELERRVNATF (122 aa). Residues 427–430 carry the S1P recognition motif; that stretch reads RNLL. N481, N505, and N518 each carry an N-linked (GlcNAc...) asparagine glycan.

This sequence belongs to the bZIP family. ATF subfamily. In terms of assembly, binds DNA as a dimer. Post-translationally, upon ER stress, translocated to the Golgi apparatus, where it is processed by regulated intramembrane proteolysis (RIP) to release the cytosol-facing N-terminal transcription factor domain. The cleavage is performed sequentially by site-1 and site-2 proteases (S1P/MBTPS1 and S2P/MBTPS2). N-glycosylated. In terms of processing, ubiquitinated by HRD1/SYVN1; undergoes 'Lys-48'-linked ubiquitination, followed by rapid proteasomal degradation under normal conditions. Upon ER stress, SYVN1 E3 ubiquitin-protein ligase dissociates from its substrate, ubiquitination does not occur and CREB3L2 is stabilized. In terms of tissue distribution, widely expressed, including in lung, bladder, ovary, testis and spleen. Highly expressed in chondrocytes.

It is found in the endoplasmic reticulum membrane. It localises to the nucleus. Functionally, transcription factor involved in unfolded protein response (UPR). In the absence of endoplasmic reticulum (ER) stress, inserted into ER membranes, with N-terminal DNA-binding and transcription activation domains oriented toward the cytosolic face of the membrane. In response to ER stress, transported to the Golgi, where it is cleaved in a site-specific manner by resident proteases S1P/MBTPS1 and S2P/MBTPS2. The released N-terminal cytosolic domain is translocated to the nucleus to effect transcription of specific target genes. Plays a critical role in chondrogenesis by activating the transcription of SEC23A, which promotes the transport and secretion of cartilage matrix proteins, and possibly that of ER biogenesis-related genes. In a neuroblastoma cell line, protects cells from ER stress-induced death. In vitro activates transcription of target genes via direct binding to the CRE site. In Mus musculus (Mouse), this protein is Cyclic AMP-responsive element-binding protein 3-like protein 2 (Creb3l2).